Consider the following 388-residue polypeptide: Putative 8-amino-7-oxononanoate synthase (388 aa).

Arginine 18 lines the substrate pocket. Residue 105 to 106 (GY) participates in pyridoxal 5'-phosphate binding. Position 130 (histidine 130) interacts with substrate. Residues serine 176, 201–204 (DDAH), and 232–235 (TLSK) contribute to the pyridoxal 5'-phosphate site. Lysine 235 is subject to N6-(pyridoxal phosphate)lysine. Residue threonine 349 coordinates substrate.

Belongs to the class-II pyridoxal-phosphate-dependent aminotransferase family. BioF subfamily. Homodimer. Requires pyridoxal 5'-phosphate as cofactor.

It carries out the reaction 6-carboxyhexanoyl-[ACP] + L-alanine + H(+) = (8S)-8-amino-7-oxononanoate + holo-[ACP] + CO2. Its pathway is cofactor biosynthesis; biotin biosynthesis. In terms of biological role, catalyzes the decarboxylative condensation of pimeloyl-[acyl-carrier protein] and L-alanine to produce 8-amino-7-oxononanoate (AON), [acyl-carrier protein], and carbon dioxide. This Acetivibrio thermocellus (strain ATCC 27405 / DSM 1237 / JCM 9322 / NBRC 103400 / NCIMB 10682 / NRRL B-4536 / VPI 7372) (Clostridium thermocellum) protein is Putative 8-amino-7-oxononanoate synthase (bioF).